Here is a 296-residue protein sequence, read N- to C-terminus: Complex I intermediate-associated protein 30, mitochondrial (296 aa).

The N-terminal 29 residues, 1–29 (MNSLLRQGLRLGCCLPAVQQQIHTTAVHR), are a transit peptide targeting the mitochondrion.

Belongs to the CIA30 family. In terms of assembly, associates with mitochondrial complex I assembly intermediates during its biogenesis.

Its subcellular location is the mitochondrion. Its function is as follows. Chaperone protein involved in the assembly of the mitochondrial NADH:ubiquinone oxidoreductase complex (complex I). This Drosophila melanogaster (Fruit fly) protein is Complex I intermediate-associated protein 30, mitochondrial.